We begin with the raw amino-acid sequence, 212 residues long: 2-hydroxychromene-2-carboxylate isomerase (212 aa).

Serine 24 serves as the catalytic Nucleophile. Glutathione is bound at residue serine 24. Residues lysine 56, 66–67, and tyrosine 97 contribute to the substrate site; that span reads NR. Glutathione-binding positions include valine 181 and 192–195; that span reads WGND.

It belongs to the GST superfamily. NadH family. Glutathione is required as a cofactor.

The enzyme catalyses 2-hydroxychromene-2-carboxylate = (3E)-4-(2-hydroxyphenyl)-2-oxobut-3-enoate. Its pathway is aromatic compound metabolism; naphthalene degradation. Functionally, involved in the naphthalene catabolic pathway. Catalyzes the reversible glutathione-dependent isomerization of 2-hydroxychromene-2-carboxylate (HCCA) to trans-O-hydroxybenzylidenepyruvate (THBPA). The protein is 2-hydroxychromene-2-carboxylate isomerase (doxJ) of Pseudomonas sp. (strain C18).